The following is a 202-amino-acid chain: MSQKILFATGNKGKARELKEAFKTAGVDVEIITNSDLDNPPHPIESGRTFEANAKIKAHELADYSKLPTIADDSGLMVDALNGEPGVRSARYAGEAHNDAKNNAKLLANLGGIPDEKRTAKFWTTIVVSMPGEFEKDLVVSGTCSGRILAAPRGDDGFGYDPLFFVPKKDKTFAQMTTDEKNEISHRGNVVRELLKVLPALA.

Residue 9-14 coordinates substrate; that stretch reads TGNKGK. The active-site Proton acceptor is aspartate 73. Mg(2+) is bound at residue aspartate 73. Substrate contacts are provided by residues serine 74, 158–161, lysine 181, and 186–187; these read FGYD and HR.

This sequence belongs to the HAM1 NTPase family. In terms of assembly, homodimer. Mg(2+) serves as cofactor.

The catalysed reaction is XTP + H2O = XMP + diphosphate + H(+). It catalyses the reaction dITP + H2O = dIMP + diphosphate + H(+). The enzyme catalyses ITP + H2O = IMP + diphosphate + H(+). Pyrophosphatase that catalyzes the hydrolysis of nucleoside triphosphates to their monophosphate derivatives, with a high preference for the non-canonical purine nucleotides XTP (xanthosine triphosphate), dITP (deoxyinosine triphosphate) and ITP. Seems to function as a house-cleaning enzyme that removes non-canonical purine nucleotides from the nucleotide pool, thus preventing their incorporation into DNA/RNA and avoiding chromosomal lesions. The protein is dITP/XTP pyrophosphatase of Lactobacillus acidophilus (strain ATCC 700396 / NCK56 / N2 / NCFM).